Reading from the N-terminus, the 264-residue chain is Methionine aminopeptidase (264 aa).

His79 serves as a coordination point for substrate. 3 residues coordinate a divalent metal cation: Asp97, Asp108, and His171. His178 lines the substrate pocket. Glu204 and Glu235 together coordinate a divalent metal cation.

It belongs to the peptidase M24A family. Methionine aminopeptidase type 1 subfamily. Monomer. Co(2+) is required as a cofactor. Zn(2+) serves as cofactor. It depends on Mn(2+) as a cofactor. The cofactor is Fe(2+).

The enzyme catalyses Release of N-terminal amino acids, preferentially methionine, from peptides and arylamides.. Its function is as follows. Removes the N-terminal methionine from nascent proteins. The N-terminal methionine is often cleaved when the second residue in the primary sequence is small and uncharged (Met-Ala-, Cys, Gly, Pro, Ser, Thr, or Val). Requires deformylation of the N(alpha)-formylated initiator methionine before it can be hydrolyzed. This Escherichia coli O157:H7 protein is Methionine aminopeptidase.